Consider the following 427-residue polypeptide: 3-phosphoshikimate 1-carboxyvinyltransferase (427 aa).

3-phosphoshikimate is bound by residues lysine 22, serine 23, and arginine 27. A phosphoenolpyruvate-binding site is contributed by lysine 22. Phosphoenolpyruvate is bound by residues glycine 96 and arginine 124. Serine 169, serine 170, glutamine 171, serine 197, aspartate 313, asparagine 336, and lysine 340 together coordinate 3-phosphoshikimate. Glutamine 171 lines the phosphoenolpyruvate pocket. The active-site Proton acceptor is aspartate 313. The phosphoenolpyruvate site is built by arginine 344, arginine 386, and lysine 411.

Belongs to the EPSP synthase family. In terms of assembly, monomer.

The protein localises to the cytoplasm. It carries out the reaction 3-phosphoshikimate + phosphoenolpyruvate = 5-O-(1-carboxyvinyl)-3-phosphoshikimate + phosphate. The protein operates within metabolic intermediate biosynthesis; chorismate biosynthesis; chorismate from D-erythrose 4-phosphate and phosphoenolpyruvate: step 6/7. Functionally, catalyzes the transfer of the enolpyruvyl moiety of phosphoenolpyruvate (PEP) to the 5-hydroxyl of shikimate-3-phosphate (S3P) to produce enolpyruvyl shikimate-3-phosphate and inorganic phosphate. In Salmonella schwarzengrund (strain CVM19633), this protein is 3-phosphoshikimate 1-carboxyvinyltransferase.